Consider the following 498-residue polypeptide: Early growth response protein 1 (498 aa).

2 disordered regions span residues 137–203 and 287–308; these read NASP…TASI and PSRMRKYPNRPSKTPPHERPYA. Residues 139-163 show a composition bias toward low complexity; that stretch reads SPSSAPSSSPSSSSSSSQSPPLSCS. A compositionally biased stretch (polar residues) spans 179–202; that stretch reads FPNSSPELFPDQSPQPFQNASTAS. C2H2-type zinc fingers lie at residues 307–331, 337–359, and 365–387; these read YACPVESCDRRFSRSDELTRHIRIH, FQCRICMRNFSRSDHLTTHIRTH, and FACDICGRKFARSDERKRHTKIH. Residues 378–422 form a disordered region; sequence DERKRHTKIHLRQKDKKADKATPVSVASPVSSYSPSASTSYPSPV. A compositionally biased stretch (basic residues) spans 382–392; the sequence is RHTKIHLRQKD. Residues 398 to 422 show a composition bias toward low complexity; it reads ATPVSVASPVSSYSPSASTSYPSPV.

Belongs to the EGR C2H2-type zinc-finger protein family.

It is found in the nucleus. The protein localises to the cytoplasm. In terms of biological role, transcriptional regulator. Recognizes and binds to the DNA sequence 5'-GCG(T/G)GGGCG-3'(EGR-site) in the promoter region of target genes. Binds double-stranded target DNA, irrespective of the cytosine methylation status. Regulates the transcription of numerous target genes, and thereby plays an important role in regulating the response to growth factors, DNA damage, and ischemia. Plays a role in the regulation of cell survival, proliferation and cell death. Mediates responses to ischemia and hypoxia; regulates the expression of proteins that are involved in inflammatory processes. Plays a role in regulating the expression of circadian clock genes. This is Early growth response protein 1 from Xenopus tropicalis (Western clawed frog).